Reading from the N-terminus, the 155-residue chain is RNA pyrophosphohydrolase (155 aa).

The region spanning 6-148 (GYRANVAIVL…KQDVYRRALT (143 aa)) is the Nudix hydrolase domain. The Nudix box signature appears at 38–59 (GGVATGETPLQAMYRELYEEVG).

This sequence belongs to the Nudix hydrolase family. RppH subfamily. A divalent metal cation is required as a cofactor.

Accelerates the degradation of transcripts by removing pyrophosphate from the 5'-end of triphosphorylated RNA, leading to a more labile monophosphorylated state that can stimulate subsequent ribonuclease cleavage. This chain is RNA pyrophosphohydrolase, found in Francisella philomiragia subsp. philomiragia (strain ATCC 25017 / CCUG 19701 / FSC 153 / O#319-036).